The sequence spans 339 residues: Ribosomal RNA small subunit methyltransferase C (339 aa).

This sequence belongs to the methyltransferase superfamily. RsmC family. As to quaternary structure, monomer.

The protein resides in the cytoplasm. It catalyses the reaction guanosine(1207) in 16S rRNA + S-adenosyl-L-methionine = N(2)-methylguanosine(1207) in 16S rRNA + S-adenosyl-L-homocysteine + H(+). In terms of biological role, specifically methylates the guanine in position 1207 of 16S rRNA in the 30S particle. The chain is Ribosomal RNA small subunit methyltransferase C from Aliivibrio fischeri (strain MJ11) (Vibrio fischeri).